We begin with the raw amino-acid sequence, 592 residues long: Aspartate--tRNA(Asp/Asn) ligase (592 aa).

Glutamate 172 is a binding site for L-aspartate. Positions 196–199 (QLFK) are aspartate. Position 218 (arginine 218) interacts with L-aspartate. ATP contacts are provided by residues 218–220 (RDE) and glutamine 227. Histidine 450 provides a ligand contact to L-aspartate. ATP is bound at residue glutamate 484. Arginine 491 contacts L-aspartate. 536 to 539 (GLDR) provides a ligand contact to ATP.

The protein belongs to the class-II aminoacyl-tRNA synthetase family. Type 1 subfamily. As to quaternary structure, homodimer.

It is found in the cytoplasm. The catalysed reaction is tRNA(Asx) + L-aspartate + ATP = L-aspartyl-tRNA(Asx) + AMP + diphosphate. Functionally, aspartyl-tRNA synthetase with relaxed tRNA specificity since it is able to aspartylate not only its cognate tRNA(Asp) but also tRNA(Asn). Reaction proceeds in two steps: L-aspartate is first activated by ATP to form Asp-AMP and then transferred to the acceptor end of tRNA(Asp/Asn). In Thioalkalivibrio sulfidiphilus (strain HL-EbGR7), this protein is Aspartate--tRNA(Asp/Asn) ligase.